We begin with the raw amino-acid sequence, 157 residues long: MISSVPYRERQSIGGIRSCPHSPASSRFPRVNDSAPTVFQGWDVPIGTPISMNIWNTHYNKDFFPGPTEFWPERWMGEGTRELEKYLVPFGSGSRMCTGQNLSIAEQVLTIATLFRNYELELYQTTKKNVVMASYCMISLPGSESPGIQVKVRKTVQ.

Cys-97 serves as a coordination point for heme.

Belongs to the cytochrome P450 family. It depends on heme as a cofactor.

It participates in secondary metabolite biosynthesis. Cytochrome P450 monooxygenase; part of the gene cluster that mediates the biosynthesis of terreic acid, a quinone epoxide inhibitor of Bruton's tyrosine kinase (BTK). The first step of the pathway is the synthesis of 6-methylsalicylic acid (6-MSA) by the 6-methylsalicylic acid synthase atX. In the biosynthesis of 6-MSA, atX utilizes one acetyl-CoA and three malonyl-CoAs as its substrates and catalyzes a series of programmed reactions including Claisen condensation, reduction, aldol cyclization, and the hydrolytic cleavage that yields 6-MSA. The 6-methylsalicylate 1-monooxygenase atA then catalyzes the decarboxylative hydroxylation of 6-MSA to 3-methylcatechol. The next step is the conversion of 3-methylcatechol to 3-methyl-1,2,4-benzenetriol by cytochrome P450 monooxygenase atE, which is enhanced by cytochrome P450 monooxygenase atG. Then, the epoxidase atD catalyzes the epoxidation and hydroxyl oxidation of 3-methyl-1,2,4-benzenetriol to terremutin. Lastly, GMC oxidoreductase atC oxidizes terremutin to terreic acid. This chain is Cytochrome P450 monooxygenase atG, found in Aspergillus terreus (strain NIH 2624 / FGSC A1156).